Here is a 731-residue protein sequence, read N- to C-terminus: Bifunctional trehalose-6-phosphate synthase/phosphatase (731 aa).

An alpha,alpha-trehalose-phosphate synthase region spans residues 1-464; that stretch reads MRLIVVSNRL…WGTDFIYSLI (464 aa). Position 9 (Arg9) interacts with D-glucose 6-phosphate. A UDP-alpha-D-glucose-binding site is contributed by 25 to 26; the sequence is GG. The D-glucose 6-phosphate site is built by Tyr89 and Asp143. Residues Arg276 and Lys281 each contribute to the UDP-alpha-D-glucose site. Residue Arg314 participates in D-glucose 6-phosphate binding. Position 379–383 (379–383) interacts with UDP-alpha-D-glucose; sequence LVAKE. A trehalose-6-phosphate phosphatase region spans residues 465–731; it reads SAKSAREEVE…RSLLEQLRPP (267 aa). Catalysis depends on Asp503, which acts as the Nucleophile. Positions 503, 505, and 684 each coordinate Mg(2+). Residue 503 to 505 coordinates alpha,alpha-trehalose 6-phosphate; it reads DYD.

This sequence in the N-terminal section; belongs to the glycosyltransferase 20 family. In the C-terminal section; belongs to the trehalose phosphatase family. In terms of assembly, may interact with the putative glycosyltransferase (GT) TTX_1305. TTX_1305 is required for the trehalose-6-phosphate synthase activity of tpsp. Mg(2+) serves as cofactor.

The enzyme catalyses D-glucose 6-phosphate + UDP-alpha-D-glucose = alpha,alpha-trehalose 6-phosphate + UDP + H(+). It catalyses the reaction alpha,alpha-trehalose 6-phosphate + H2O = alpha,alpha-trehalose + phosphate. The protein operates within glycan biosynthesis; trehalose biosynthesis. In terms of biological role, bifunctional enzyme which catalyzes the transfer of glucose from UDP-alpha-D-glucose to glucose-6-phosphate to form trehalose-6-phosphate (Tre6P) and removes the phosphate from Tre6P to produce free trehalose. This Thermoproteus tenax (strain ATCC 35583 / DSM 2078 / JCM 9277 / NBRC 100435 / Kra 1) protein is Bifunctional trehalose-6-phosphate synthase/phosphatase.